Reading from the N-terminus, the 61-residue chain is Small ribosomal subunit protein uS14B (61 aa).

4 residues coordinate Zn(2+): cysteine 24, cysteine 27, cysteine 40, and cysteine 43.

Belongs to the universal ribosomal protein uS14 family. Zinc-binding uS14 subfamily. In terms of assembly, part of the 30S ribosomal subunit. Contacts proteins S3 and S10. The cofactor is Zn(2+).

In terms of biological role, binds 16S rRNA, required for the assembly of 30S particles and may also be responsible for determining the conformation of the 16S rRNA at the A site. The protein is Small ribosomal subunit protein uS14B of Streptococcus agalactiae serotype Ia (strain ATCC 27591 / A909 / CDC SS700).